The primary structure comprises 384 residues: N-acetyldiaminopimelate deacetylase (384 aa).

The active site involves Asp73. Residue Glu132 is the Proton acceptor of the active site.

The protein belongs to the peptidase M20A family. N-acetyldiaminopimelate deacetylase subfamily.

It catalyses the reaction N-acetyl-(2S,6S)-2,6-diaminopimelate + H2O = (2S,6S)-2,6-diaminopimelate + acetate. It functions in the pathway amino-acid biosynthesis; L-lysine biosynthesis via DAP pathway; LL-2,6-diaminopimelate from (S)-tetrahydrodipicolinate (acetylase route): step 3/3. In terms of biological role, catalyzes the conversion of N-acetyl-diaminopimelate to diaminopimelate and acetate. This Limosilactobacillus fermentum (strain NBRC 3956 / LMG 18251) (Lactobacillus fermentum) protein is N-acetyldiaminopimelate deacetylase.